The sequence spans 422 residues: Probable Na(+)/H(+) antiporter 2 (422 aa).

The next 13 membrane-spanning stretches (helical) occupy residues 3 to 23, 28 to 48, 52 to 72, 93 to 113, 119 to 139, 157 to 177, 183 to 203, 216 to 236, 242 to 262, 281 to 301, 307 to 327, 341 to 361, and 384 to 404; these read IVLFLGYLSILFAGGAIIAKI, GIPDIPLLLIFGLILSILNVI, IVESSFDFIGNFGLIILLFIG, ILALLIVWIISGIVFNFVFHL, IGLLFGAIVSATDPATLIPIF, VFNDPLGIVVTLICLSALGLA, ILEFFSLAVGGIILGVIAGKF, YIAPFTLGLAIAFWYFAEGIF, YEISGFMAVAIMGLYIGNVIV, LSIFIRILIFVLLGASISIPL, LPAFLCALGSILLARPVGVLI, IYLALEGPRGVVPATLAAMVY, and LAGTILVATFMTIIVSVVLEA.

It belongs to the monovalent cation:proton antiporter 1 (CPA1) transporter (TC 2.A.36) family.

It is found in the cell membrane. Functionally, this is probably a Na(+)/H(+) antiporter. The chain is Probable Na(+)/H(+) antiporter 2 from Methanocaldococcus jannaschii (strain ATCC 43067 / DSM 2661 / JAL-1 / JCM 10045 / NBRC 100440) (Methanococcus jannaschii).